The following is a 207-amino-acid chain: Large ribosomal subunit protein bL25 (207 aa).

The interval 1–20 (MANHQIKAQRRKDEGKGASR) is disordered.

It belongs to the bacterial ribosomal protein bL25 family. CTC subfamily. In terms of assembly, part of the 50S ribosomal subunit; part of the 5S rRNA/L5/L18/L25 subcomplex. Contacts the 5S rRNA. Binds to the 5S rRNA independently of L5 and L18.

Functionally, this is one of the proteins that binds to the 5S RNA in the ribosome where it forms part of the central protuberance. This is Large ribosomal subunit protein bL25 from Xylella fastidiosa (strain M12).